The primary structure comprises 517 residues: 2-isopropylmalate synthase (517 aa).

One can recognise a Pyruvate carboxyltransferase domain in the interval Ile-5–His-268. Residues Asp-14, His-202, His-204, and Asn-238 each contribute to the Mn(2+) site. The segment at Ser-393–Gln-517 is regulatory domain.

This sequence belongs to the alpha-IPM synthase/homocitrate synthase family. LeuA type 1 subfamily. As to quaternary structure, homodimer. It depends on Mn(2+) as a cofactor.

The protein localises to the cytoplasm. The enzyme catalyses 3-methyl-2-oxobutanoate + acetyl-CoA + H2O = (2S)-2-isopropylmalate + CoA + H(+). Its pathway is amino-acid biosynthesis; L-leucine biosynthesis; L-leucine from 3-methyl-2-oxobutanoate: step 1/4. Catalyzes the condensation of the acetyl group of acetyl-CoA with 3-methyl-2-oxobutanoate (2-ketoisovalerate) to form 3-carboxy-3-hydroxy-4-methylpentanoate (2-isopropylmalate). The polypeptide is 2-isopropylmalate synthase (Histophilus somni (strain 129Pt) (Haemophilus somnus)).